Consider the following 43-residue polypeptide: Protein PsbN (43 aa).

Residues 7–29 (LSIALAAVCIGVTGYSIYLSFGP) form a helical membrane-spanning segment.

This sequence belongs to the PsbN family.

The protein resides in the cellular thylakoid membrane. May play a role in photosystem I and II biogenesis. The polypeptide is Protein PsbN (Thermosynechococcus vestitus (strain NIES-2133 / IAM M-273 / BP-1)).